A 426-amino-acid polypeptide reads, in one-letter code: Protein EARLY STARVATION 1, chloroplastic (426 aa).

The N-terminal 58 residues, 1-58 (MSEMAASSAISLLDIKLRRFGVGASNHELRLTKWFKGDQAGAPTRRFTCFADMLAPIR), are a transit peptide targeting the chloroplast. Disordered stretches follow at residues 106–127 (CTPRLTGPQSRDTPPKRDTGIA) and 396–426 (QPRERPPGVYPNLEFGPSPPPEPDLPPDQPQ). Residues 118–127 (TPPKRDTGIA) are compositionally biased toward basic and acidic residues. Residues 412 to 426 (PSPPPEPDLPPDQPQ) are compositionally biased toward pro residues.

This sequence belongs to the ESV1 family.

It is found in the plastid. The protein resides in the chloroplast stroma. The protein localises to the plastid stroma. Binds preferentially to highly ordered alpha-glucans, such as starch and crystalline maltodextrins. Involved in the organization of the starch granule matrix, thus influencing starch turnover by modulating the accessibility of starch polymers to modifying and degrading enzymes involved in phosphorylation, hydrolyzes and synthesis, including starch synthases (SSI and SSIII), starch phosphorylases (PHS1), isoamylase, beta-amylase, glucan water dikinase (GWD) and phosphoglucan water dikinase (PWD). Prevents GWD- and PWD-mediated starch phosphorylation, and subsequent degradation. Required for the control of starch degradation in leaves and starch distribution in nonphotosynthetic parts (e.g. cells immediately adjacent to veins, columella cells of root caps, stems, flowers and siliques) by limiting the hasty depletion of starch reserves during the night. Promotes gravitropic responses, negative in shoots but positive in roots, by maintaining starch granules (statoliths) accumulation in hypocotyls and roots columella, especially in dark conditions and in the endodermis, where starch is formed from transported glucose-6-phosphates. This is Protein EARLY STARVATION 1, chloroplastic from Arabidopsis thaliana (Mouse-ear cress).